Reading from the N-terminus, the 197-residue chain is MAEREQRGGRDQRGGGRERKEREERDSEFVDKLVHINRVAKVVKGGKRFGFAALVVIGDQKGRAGFGHGKAREVPEAIRKATESAKRNLTRVSLREGRTLHHDIAGRHGAGRVYLRAAPAGTGIIAGGPMRAVFETLGVQDVVAKSIGSSNPYNMVRATFDALKHQDSPRSVAARRNIKVSTLQSRRIGGDAEAAAD.

Residues 1–27 (MAEREQRGGRDQRGGGRERKEREERDS) are disordered. An S5 DRBM domain is found at 29-92 (FVDKLVHINR…ESAKRNLTRV (64 aa)).

This sequence belongs to the universal ribosomal protein uS5 family. In terms of assembly, part of the 30S ribosomal subunit. Contacts proteins S4 and S8.

With S4 and S12 plays an important role in translational accuracy. Functionally, located at the back of the 30S subunit body where it stabilizes the conformation of the head with respect to the body. The protein is Small ribosomal subunit protein uS5 of Bradyrhizobium diazoefficiens (strain JCM 10833 / BCRC 13528 / IAM 13628 / NBRC 14792 / USDA 110).